The following is a 352-amino-acid chain: D-alanine--D-alanine ligase (352 aa).

In terms of domain architecture, ATP-grasp spans 133–342; the sequence is KTVFAAAGLP…FPKLVDRLIQ (210 aa). An ATP-binding site is contributed by 169–224; it reads DETIGYPNFVKPANLGSSVGISKVRSRLELEAALDSAASFDRRIVVEAGVVAREVE. Residues aspartate 295, glutamate 309, and asparagine 311 each coordinate Mg(2+).

Belongs to the D-alanine--D-alanine ligase family. The cofactor is Mg(2+). Mn(2+) serves as cofactor.

Its subcellular location is the cytoplasm. It carries out the reaction 2 D-alanine + ATP = D-alanyl-D-alanine + ADP + phosphate + H(+). The protein operates within cell wall biogenesis; peptidoglycan biosynthesis. Cell wall formation. This chain is D-alanine--D-alanine ligase, found in Acaryochloris marina (strain MBIC 11017).